The primary structure comprises 276 residues: Shikimate dehydrogenase (NADP(+)) (276 aa).

Shikimate is bound by residues 20 to 22 (SRS) and T67. K71 serves as the catalytic Proton acceptor. D83 serves as a coordination point for NADP(+). N92 and D107 together coordinate shikimate. NADP(+)-binding positions include 131–135 (GAGGA) and I217. Shikimate is bound at residue Y219. Residue G240 coordinates NADP(+).

It belongs to the shikimate dehydrogenase family. Homodimer.

It catalyses the reaction shikimate + NADP(+) = 3-dehydroshikimate + NADPH + H(+). It participates in metabolic intermediate biosynthesis; chorismate biosynthesis; chorismate from D-erythrose 4-phosphate and phosphoenolpyruvate: step 4/7. In terms of biological role, involved in the biosynthesis of the chorismate, which leads to the biosynthesis of aromatic amino acids. Catalyzes the reversible NADPH linked reduction of 3-dehydroshikimate (DHSA) to yield shikimate (SA). This Acidiphilium cryptum (strain JF-5) protein is Shikimate dehydrogenase (NADP(+)).